We begin with the raw amino-acid sequence, 85 residues long: Large ribosomal subunit protein bL27 (85 aa).

The disordered stretch occupies residues Met-1–Val-23.

It belongs to the bacterial ribosomal protein bL27 family.

The sequence is that of Large ribosomal subunit protein bL27 from Thioalkalivibrio sulfidiphilus (strain HL-EbGR7).